We begin with the raw amino-acid sequence, 947 residues long: DNA mismatch repair protein MutS (947 aa).

620–627 (GPNMSGKS) contributes to the ATP binding site.

Belongs to the DNA mismatch repair MutS family.

Functionally, this protein is involved in the repair of mismatches in DNA. It is possible that it carries out the mismatch recognition step. This protein has a weak ATPase activity. The protein is DNA mismatch repair protein MutS of Clostridioides difficile (strain 630) (Peptoclostridium difficile).